Here is a 57-residue protein sequence, read N- to C-terminus: COP9 signalosome complex subunit 9 (57 aa).

The protein belongs to the CSN9 family. As to quaternary structure, component of the CSN complex, probably composed of cops1, cops2, cops3, cops4, cops5, cops6, cops7, cops8 and cops9.

The protein localises to the nucleus. It localises to the cytoplasm. Its subcellular location is the nucleoplasm. Functionally, component of the COP9 signalosome complex (CSN), a complex involved in various cellular and developmental processes. The CSN complex is an essential regulator of the ubiquitin (Ubl) conjugation pathway by mediating the deneddylation of the cullin subunits of SCF-type E3 ligase complexes, leading to decrease the Ubl ligase activity. May play a role in cell proliferation. This is COP9 signalosome complex subunit 9 from Xenopus laevis (African clawed frog).